A 603-amino-acid chain; its full sequence is MSSMRTYVAIMKKPSVEHVDNVDKKASKPSWRVSLSAGLRSSCSLQLEVKPADQILTARRSGNYQPSLWDFNYLQSLNTTHYKEVRHLKREAELIEQVKMLLEEEMEAVQQLELVDDLKNLGLSYFFEDQIKQILTFIYNEHKCFHSNSIIEAEEIRDLYFTALGFRLLRQHGFQISQEVFDCFKNEEGSDFKARLGDDTKGLLQLYEASFLLREGEDTLELARQYATKFLQKKVDHELIDDNNLLSWILHSLEIPLHWRIQRLEARWFLDAYASRRDMNQIILELAKLDFNIIQATQQEELKDLSRWWKSSCLAEKLPFVRDRLVESYFWAIALFEPHQYGYHRKIAAKIITLITSLDDVYDIYGTLDELQLFTDAIQRWDTESISRLPYYMQLFYMVLYNFVPRLAYDGLKEKGFITIPYLQRSWADLVEAYLKEAKWYYNGYTPSMEEYLNNAYISIGATPVISQVFFTLATSIDKPVIDSLYEYHRILRLSGILVRLPDDLGTSPFEMKRGDVPKAIQLYMKERNATEIEAQEHVRFLIREAWKEMNTATAAVDCPFTDDLVTAAANLGRAAQFMYLDGDGNHSQLHQRIACLLFEPYA.

Residues 1 to 36 (MSSMRTYVAIMKKPSVEHVDNVDKKASKPSWRVSLS) constitute a chloroplast transit peptide. Arg-322, Asp-359, Asp-363, Arg-500, and Asp-503 together coordinate (2E)-geranyl diphosphate. 2 residues coordinate Mg(2+): Asp-359 and Asp-363. A DDXXD motif motif is present at residues 359 to 363 (DDVYD). Mg(2+)-binding residues include Asp-503, Thr-507, and Glu-511.

The protein belongs to the terpene synthase family. Tpsb subfamily. In terms of assembly, monomer. The cofactor is Mg(2+). It depends on Mn(2+) as a cofactor.

It localises to the plastid. Its subcellular location is the chloroplast. It carries out the reaction (2E)-geranyl diphosphate + H2O = linalool + diphosphate. Its pathway is secondary metabolite biosynthesis; terpenoid biosynthesis. Functionally, monoterpene synthase (mono-TPS) involved in the biosynthesis of monoterpenes natural products. Catalyzes the conversion of (2E)-geranyl diphosphate (GPP) into linalool. The sequence is that of Linalool synthase Tps-5031L19, chloroplastic from Perilla frutescens var. hirtella (Perilla citriodora).